A 540-amino-acid chain; its full sequence is CTP synthase (540 aa).

An amidoligase domain region spans residues 1–267 (MTKYIFVTGG…DQKVCDFLHL (267 aa)). Ser-13 provides a ligand contact to CTP. Ser-13 is a UTP binding site. An ATP-binding site is contributed by 14-19 (SLGKGI). Residue Tyr-54 participates in L-glutamine binding. Asp-71 is an ATP binding site. Asp-71 and Glu-141 together coordinate Mg(2+). Residues 148 to 150 (DIE), 188 to 193 (KTKPTQ), and Lys-224 each bind CTP. Residues 188–193 (KTKPTQ) and Lys-224 each bind UTP. Positions 294-537 (TITLVGKYVE…IGAASGLPAQ (244 aa)) constitute a Glutamine amidotransferase type-1 domain. Gly-356 serves as a coordination point for L-glutamine. Cys-383 serves as the catalytic Nucleophile; for glutamine hydrolysis. L-glutamine-binding positions include 384-387 (LGMQ), Glu-407, and Arg-465. Residues His-510 and Glu-512 contribute to the active site.

It belongs to the CTP synthase family. In terms of assembly, homotetramer.

The enzyme catalyses UTP + L-glutamine + ATP + H2O = CTP + L-glutamate + ADP + phosphate + 2 H(+). It carries out the reaction L-glutamine + H2O = L-glutamate + NH4(+). It catalyses the reaction UTP + NH4(+) + ATP = CTP + ADP + phosphate + 2 H(+). It functions in the pathway pyrimidine metabolism; CTP biosynthesis via de novo pathway; CTP from UDP: step 2/2. Allosterically activated by GTP, when glutamine is the substrate; GTP has no effect on the reaction when ammonia is the substrate. The allosteric effector GTP functions by stabilizing the protein conformation that binds the tetrahedral intermediate(s) formed during glutamine hydrolysis. Inhibited by the product CTP, via allosteric rather than competitive inhibition. In terms of biological role, catalyzes the ATP-dependent amination of UTP to CTP with either L-glutamine or ammonia as the source of nitrogen. Regulates intracellular CTP levels through interactions with the four ribonucleotide triphosphates. The polypeptide is CTP synthase (Lactobacillus johnsonii (strain CNCM I-12250 / La1 / NCC 533)).